Reading from the N-terminus, the 311-residue chain is Formimidoylglutamase (311 aa).

Mn(2+) is bound by residues His-122, Asp-151, His-153, Asp-155, Cys-242, and Asp-244.

This sequence belongs to the arginase family. Mn(2+) serves as cofactor.

The catalysed reaction is N-formimidoyl-L-glutamate + H2O = formamide + L-glutamate. The protein operates within amino-acid degradation; L-histidine degradation into L-glutamate; L-glutamate from N-formimidoyl-L-glutamate (hydrolase route): step 1/1. Functionally, catalyzes the conversion of N-formimidoyl-L-glutamate to L-glutamate and formamide. The chain is Formimidoylglutamase from Pseudomonas aeruginosa (strain UCBPP-PA14).